The chain runs to 158 residues: NAD(P)H-quinone oxidoreductase subunit J, chloroplastic (158 aa).

This sequence belongs to the complex I 30 kDa subunit family. As to quaternary structure, NDH is composed of at least 16 different subunits, 5 of which are encoded in the nucleus.

It localises to the plastid. Its subcellular location is the chloroplast thylakoid membrane. It carries out the reaction a plastoquinone + NADH + (n+1) H(+)(in) = a plastoquinol + NAD(+) + n H(+)(out). It catalyses the reaction a plastoquinone + NADPH + (n+1) H(+)(in) = a plastoquinol + NADP(+) + n H(+)(out). In terms of biological role, NDH shuttles electrons from NAD(P)H:plastoquinone, via FMN and iron-sulfur (Fe-S) centers, to quinones in the photosynthetic chain and possibly in a chloroplast respiratory chain. The immediate electron acceptor for the enzyme in this species is believed to be plastoquinone. Couples the redox reaction to proton translocation, and thus conserves the redox energy in a proton gradient. The sequence is that of NAD(P)H-quinone oxidoreductase subunit J, chloroplastic from Oenothera argillicola (Appalachian evening primrose).